The primary structure comprises 354 residues: Guanine nucleotide-binding protein G(i) subunit alpha (354 aa).

Gly2 carries the N-myristoyl glycine lipid modification. The S-palmitoyl cysteine moiety is linked to residue Cys3. The G-alpha domain occupies 32 to 354 (REVKLLLLGA…KNNLKDCGLF (323 aa)). The interval 35–48 (KLLLLGAGESGKST) is G1 motif. GTP-binding positions include 40–47 (GAGESGKS), 175–181 (LRTRVKT), 200–204 (DVGGQ), 269–272 (NKKD), and Ala326. Mg(2+)-binding residues include Ser47 and Thr181. Positions 173-181 (DVLRTRVKT) are G2 motif. A G3 motif region spans residues 196-205 (FKMFDVGGQR). Residues 265 to 272 (ILFLNKKD) are G4 motif. Residues 324 to 329 (TCATDT) are G5 motif.

This sequence belongs to the G-alpha family. G(i/o/t/z) subfamily. G proteins are composed of 3 units; alpha, beta and gamma. The alpha chain contains the guanine nucleotide binding site.

In terms of biological role, guanine nucleotide-binding proteins (G proteins) are involved as modulators or transducers in various transmembrane signaling systems. This chain is Guanine nucleotide-binding protein G(i) subunit alpha, found in Planorbella trivolvis (Marsh rams-horn).